Reading from the N-terminus, the 316-residue chain is DNA-directed RNA polymerase III subunit RPC6 (316 aa).

At alanine 2 the chain carries N-acetylalanine. Residues lysine 5 and lysine 7 each participate in a glycyl lysine isopeptide (Lys-Gly) (interchain with G-Cter in SUMO2) cross-link. [4Fe-4S] cluster is bound by residues cysteine 287, cysteine 290, cysteine 296, and cysteine 307.

Belongs to the eukaryotic RPC34/RPC39 RNA polymerase subunit family. Component of the RNA polymerase III complex consisting of 17 subunits: a ten-subunit horseshoe-shaped catalytic core composed of POLR3A/RPC1, POLR3B/RPC2, POLR1C/RPAC1, POLR1D/RPAC2, POLR3K/RPC10, POLR2E/RPABC1, POLR2F/RPABC2, POLR2H/RPABC3, POLR2K/RPABC4 and POLR2L/RPABC5; a mobile stalk composed of two subunits POLR3H/RPC8 and CRCP/RPC9, protruding from the core and functioning primarily in transcription initiation; and additional subunits homologous to general transcription factors of the RNA polymerase II machinery, POLR3C/RPC3-POLR3F/RPC6-POLR3G/RPC7 heterotrimer required for transcription initiation and POLR3D/RPC4-POLR3E/RPC5 heterodimer involved in both transcription initiation and termination. Directly interacts with POLR3C. Interacts with TBP and TFIIIB90 and GTF3C4. Interacts with MAF1. As part of the RNA polymerase III complex, interacts with PKP2.

It is found in the nucleus. Its function is as follows. DNA-dependent RNA polymerase catalyzes the transcription of DNA into RNA using the four ribonucleoside triphosphates as substrates. Specific peripheric component of RNA polymerase III (Pol III) which synthesizes small non-coding RNAs including 5S rRNA, snRNAs, tRNAs and miRNAs from at least 500 distinct genomic loci. Part of POLR3C/RPC3-POLR3F/RPC6-POLR3G/RPC7 heterotrimer that coordinates the dynamics of Pol III stalk and clamp modules during the transition from apo to elongation state. Pol III plays a key role in sensing and limiting infection by intracellular bacteria and DNA viruses, including varicella zoster virus. Acts as a nuclear and cytosolic DNA sensor detecting AT-rich DNA, involved in innate immune response. Can sense non-self dsDNA that serves as template for transcription into dsRNA. The non-self RNA polymerase III transcripts, such as Epstein-Barr virus-encoded RNAs (EBERs) induce type I interferon and NF-kappa-B through the RIG-I pathway. Preferentially binds double-stranded DNA (dsDNA). The polypeptide is DNA-directed RNA polymerase III subunit RPC6 (Mus musculus (Mouse)).